A 188-amino-acid polypeptide reads, in one-letter code: Elongation factor P (188 aa).

Position 34 is an N6-(3,6-diaminohexanoyl)-5-hydroxylysine (Lys-34).

The protein belongs to the elongation factor P family. In terms of processing, may be beta-lysylated on the epsilon-amino group of Lys-34 by the combined action of EpmA and EpmB, and then hydroxylated on the C5 position of the same residue by EpmC (if this protein is present). Lysylation is critical for the stimulatory effect of EF-P on peptide-bond formation. The lysylation moiety may extend toward the peptidyltransferase center and stabilize the terminal 3-CCA end of the tRNA. Hydroxylation of the C5 position on Lys-34 may allow additional potential stabilizing hydrogen-bond interactions with the P-tRNA.

The protein localises to the cytoplasm. Its pathway is protein biosynthesis; polypeptide chain elongation. Its function is as follows. Involved in peptide bond synthesis. Alleviates ribosome stalling that occurs when 3 or more consecutive Pro residues or the sequence PPG is present in a protein, possibly by augmenting the peptidyl transferase activity of the ribosome. Modification of Lys-34 is required for alleviation. The sequence is that of Elongation factor P from Pasteurella multocida (strain Pm70).